Consider the following 454-residue polypeptide: Laccase-3 (454 aa).

2 Plastocyanin-like domains span residues 1-95 (PGPT…GPAT) and 101-252 (DLGV…YSGA). Residue asparagine 24 is glycosylated (N-linked (GlcNAc...) asparagine). Residues histidine 29, histidine 31, histidine 73, and histidine 75 each contribute to the Cu cation site. Residues asparagine 138, asparagine 169, asparagine 218, asparagine 314, and asparagine 334 are each glycosylated (N-linked (GlcNAc...) asparagine). The Plastocyanin-like 3 domain maps to 319–454 (DVDWKKPILQ…SEGLAVQFQG (136 aa)). Positions 375, 378, and 380 each coordinate Cu cation. Asparagine 395 is a glycosylation site (N-linked (GlcNAc...) asparagine). Cu cation-binding residues include histidine 437, cysteine 438, histidine 439, and histidine 443.

It belongs to the multicopper oxidase family. Cu cation serves as cofactor.

It localises to the secreted. It catalyses the reaction 4 hydroquinone + O2 = 4 benzosemiquinone + 2 H2O. Its function is as follows. Lignin degradation and detoxification of lignin-derived products. The sequence is that of Laccase-3 (lcc3) from Botryotinia fuckeliana (Noble rot fungus).